A 424-amino-acid polypeptide reads, in one-letter code: Enolase (424 aa).

Q162 is a binding site for (2R)-2-phosphoglycerate. The active-site Proton donor is E204. Mg(2+) is bound by residues D241, E284, and D311. 4 residues coordinate (2R)-2-phosphoglycerate: K336, R365, S366, and K387. The active-site Proton acceptor is K336.

Belongs to the enolase family. Requires Mg(2+) as cofactor.

Its subcellular location is the cytoplasm. The protein localises to the secreted. It localises to the cell surface. It carries out the reaction (2R)-2-phosphoglycerate = phosphoenolpyruvate + H2O. It functions in the pathway carbohydrate degradation; glycolysis; pyruvate from D-glyceraldehyde 3-phosphate: step 4/5. Its function is as follows. Catalyzes the reversible conversion of 2-phosphoglycerate (2-PG) into phosphoenolpyruvate (PEP). It is essential for the degradation of carbohydrates via glycolysis. In Rhizobium meliloti (strain 1021) (Ensifer meliloti), this protein is Enolase.